Consider the following 382-residue polypeptide: Dual-specificity RNA methyltransferase RlmN (382 aa).

The active-site Proton acceptor is the E91. The region spanning 97–339 (ETDRGTLCIS…TTVRKTRGDD (243 aa)) is the Radical SAM core domain. A disulfide bridge connects residues C104 and C344. Positions 111, 115, and 118 each coordinate [4Fe-4S] cluster. S-adenosyl-L-methionine contacts are provided by residues 165–166 (GE), S197, 219–221 (SLH), and N301. C344 acts as the S-methylcysteine intermediate in catalysis.

It belongs to the radical SAM superfamily. RlmN family. It depends on [4Fe-4S] cluster as a cofactor.

The protein resides in the cytoplasm. It carries out the reaction adenosine(2503) in 23S rRNA + 2 reduced [2Fe-2S]-[ferredoxin] + 2 S-adenosyl-L-methionine = 2-methyladenosine(2503) in 23S rRNA + 5'-deoxyadenosine + L-methionine + 2 oxidized [2Fe-2S]-[ferredoxin] + S-adenosyl-L-homocysteine. The enzyme catalyses adenosine(37) in tRNA + 2 reduced [2Fe-2S]-[ferredoxin] + 2 S-adenosyl-L-methionine = 2-methyladenosine(37) in tRNA + 5'-deoxyadenosine + L-methionine + 2 oxidized [2Fe-2S]-[ferredoxin] + S-adenosyl-L-homocysteine. Specifically methylates position 2 of adenine 2503 in 23S rRNA and position 2 of adenine 37 in tRNAs. m2A2503 modification seems to play a crucial role in the proofreading step occurring at the peptidyl transferase center and thus would serve to optimize ribosomal fidelity. The sequence is that of Dual-specificity RNA methyltransferase RlmN from Polaromonas sp. (strain JS666 / ATCC BAA-500).